We begin with the raw amino-acid sequence, 146 residues long: Large ribosomal subunit protein bL21 (146 aa).

Over residues 95-104 (PKKKTRRKMG) the composition is skewed to basic residues. Positions 95–146 (PKKKTRRKMGHRQELTRVMVKSISISKSTPKSSPKTEATKKSTSSKASKPEN) are disordered. The span at 115–146 (KSISISKSTPKSSPKTEATKKSTSSKASKPEN) shows a compositional bias: low complexity.

It belongs to the bacterial ribosomal protein bL21 family. As to quaternary structure, part of the 50S ribosomal subunit. Contacts protein L20.

Its function is as follows. This protein binds to 23S rRNA in the presence of protein L20. This Prochlorococcus marinus (strain MIT 9515) protein is Large ribosomal subunit protein bL21.